Here is a 282-residue protein sequence, read N- to C-terminus: Shikimate dehydrogenase (NADP(+)) (282 aa).

Shikimate is bound by residues 19–21 (TQS) and Thr-66. Residue Lys-70 is the Proton acceptor of the active site. Residues Asn-91 and Asp-107 each contribute to the shikimate site. Residues 132–136 (GAGGA), 155–160 (NRTITR), Ile-224, and Gly-246 each bind NADP(+).

It belongs to the shikimate dehydrogenase family. Homodimer.

The enzyme catalyses shikimate + NADP(+) = 3-dehydroshikimate + NADPH + H(+). It functions in the pathway metabolic intermediate biosynthesis; chorismate biosynthesis; chorismate from D-erythrose 4-phosphate and phosphoenolpyruvate: step 4/7. In terms of biological role, involved in the biosynthesis of the chorismate, which leads to the biosynthesis of aromatic amino acids. Catalyzes the reversible NADPH linked reduction of 3-dehydroshikimate (DHSA) to yield shikimate (SA). This chain is Shikimate dehydrogenase (NADP(+)), found in Buchnera aphidicola subsp. Baizongia pistaciae (strain Bp).